The sequence spans 400 residues: Tyrosine-specific transport system 1 (400 aa).

Transmembrane regions (helical) follow at residues 5–25, 34–54, 80–100, 117–137, 143–163, 176–196, 211–231, 250–270, 273–293, 313–333, 335–355, and 370–390; these read VGSTLLVAGTMIGAGMLAMPL, FTLVLLLGLWALLTFSALLFV, IIATAVLIIFLYALIAAYISG, VSVLLFTVIFGSFIVIGTHSV, VLFFVMLAAFAVVLSLMLPEI, ALIISASPVFFTAFGFHGSIP, FSILVGSAITLCAYILWQLST, LNGLVKATFAITGSNVIASAV, FSTLALITSFLGVGLGLLECI, LTFIPPLVFALFYPEGFILAL, YAGQMFAFYAVVLPVSLVWKA, and NLTLIIVLVLGVLITSIPFAI.

Belongs to the amino acid/polyamine transporter 2 family. Mtr/TnaB/TyrP permease subfamily.

The protein localises to the cell inner membrane. The enzyme catalyses L-tyrosine(in) + H(+)(in) = L-tyrosine(out) + H(+)(out). In terms of biological role, transports tyrosine across the cytoplasmic membrane. The transport system is energized by the proton motive force. The protein is Tyrosine-specific transport system 1 (tyrP-A) of Haemophilus influenzae (strain ATCC 51907 / DSM 11121 / KW20 / Rd).